The chain runs to 519 residues: Transcription factor STP1 (519 aa).

The interval 16-35 (IPGKIYAFFRELVSGVIISK) is i. Residues 47–61 (ATKEEGKDAADEEKT) are compositionally biased toward basic and acidic residues. 2 disordered regions span residues 47-69 (ATKEEGKDAADEEKTTTSLFPES) and 115-150 (LLGSRPEQDTGAPIKMSTGVTSSPLSPSGSTPEHST). The II stretch occupies residues 65 to 97 (LFPESNNIDRSLNGGCSVIPCSMDVSDLNTPIS). The span at 131–146 (STGVTSSPLSPSGSTP) shows a compositional bias: low complexity. A C2H2-type 1 zinc finger spans residues 160–182 (FICHYCDATFRIRGYLTRHIKKH). The C2H2-type 2; atypical zinc-finger motif lies at 188–223 (YHCPFFNSATPPDLRCHNSGGFSRRDTYKTHLKARH). The segment at 240 to 265 (GHCAQCGEYFSTIENFVENHIESGDC) adopts a C2H2-type 3; atypical zinc-finger fold. Residues 357–382 (IKKKQQQVSGSTVTTPEVATQNNQEV) are disordered. A compositionally biased stretch (polar residues) spans 364–381 (VSGSTVTTPEVATQNNQE).

As to quaternary structure, interacts (via Region II) with SSY5; protease component of the SPS-sensor. Phosphorylated by casein kinase I. Phosphorylation is not dependent on the extracellular amino acid levels, but is a prerequisite for proteolytic processing. Post-translationally, activated by the amino acid-induced proteolytic removal of an N-terminal inhibitory domain by serine protease SSY5, an intrinsic component of the SPS-sensor. Processing requires at least 2 components of the SCF(GRR1) ubiquitin ligase complex, namely the F-box protein GRR1 and the E2 enzyme CDC34, but does not depend on the proteasome. Processing is negatively regulated by the protein phosphatase 2A regulatory subunit RTS1.

It is found in the cell membrane. It localises to the nucleus. Its function is as follows. Transcription factor involved in the regulation of gene expression in response to extracellular amino acid levels. Synthesized as latent cytoplasmic precursor, which, upon a signal initiated by the plasma membrane SPS (SSY1-PTR3-SSY5) amino acid sensor system, becomes proteolytically activated and relocates to the nucleus, where it induces the expression of SPS-sensor-regulated genes, including the amino-acid permeases AGP1, BAP2, BAP3 and GNP1. Binding to promoters is facilitated by DAL81. Involved in the repression of genes subject to nitrogen catabolite repression and genes involved in stress response. Negatively regulated by inner nuclear membrane proteins ASI1, ASI2 and ASI3, which prevent unprocessed precursor forms that escape cytoplasmic anchoring from inducing SPS-sensor-regulated genes. May be involved in pre-tRNA splicing. This Saccharomyces cerevisiae (strain RM11-1a) (Baker's yeast) protein is Transcription factor STP1 (STP1).